The chain runs to 307 residues: uncharacterized protein (307 aa).

This is an uncharacterized protein from Acanthamoeba polyphaga mimivirus (APMV).